A 424-amino-acid chain; its full sequence is DUF21 domain-containing protein At4g33700 (424 aa).

At 1–11 the chain is on the extracellular side; sequence MAVEYVCCSPN. Residues 8–191 form the CNNM transmembrane domain; it reads CSPNFFIHIA…GKGGELTHDE (184 aa). Residues 12 to 32 traverse the membrane as a helical segment; it reads FFIHIAVIVFLVLFAGLMSGL. Residues 33 to 70 lie on the Cytoplasmic side of the membrane; sequence TLGLMSLSLVDLEVLAKSGTPEHRKYAAKILPVVKNQH. Residues 71 to 91 traverse the membrane as a helical segment; the sequence is LLLVTLLICNAAAMETLPIFL. Residues 92 to 94 lie on the Extracellular side of the membrane; that stretch reads DGL. Residues 95-115 traverse the membrane as a helical segment; the sequence is VTAWGAILISVTLILLFGEII. Topologically, residues 116-136 are cytoplasmic; sequence PQSICSRYGLAIGATVAPFVR. The chain crosses the membrane as a helical span at residues 137–157; sequence VLVFICLPVAWPISKLLDFLL. Over 158–424 the chain is Extracellular; it reads GHRRAALFRR…DETDHHFEDS (267 aa). Positions 210–271 constitute a CBS 1 domain; the sequence is MTPISDIFVI…TINPDEEIPV (62 aa). Residues Asn-273 and Asn-319 are each glycosylated (N-linked (GlcNAc...) asparagine). 2 CBS domains span residues 275-331 and 355-416; these read TIRR…DVDS and PNRA…IFDE. 2 disordered regions span residues 321-340 and 355-374; these read SVKE…PQER and PNRA…SKDN. Ser-331 is subject to Phosphoserine.

Its subcellular location is the membrane. This chain is DUF21 domain-containing protein At4g33700 (CBSDUF6), found in Arabidopsis thaliana (Mouse-ear cress).